The following is a 323-amino-acid chain: 4-hydroxy-3-methylbut-2-enyl diphosphate reductase (323 aa).

A [4Fe-4S] cluster-binding site is contributed by cysteine 12. The (2E)-4-hydroxy-3-methylbut-2-enyl diphosphate site is built by histidine 43 and histidine 81. Dimethylallyl diphosphate is bound by residues histidine 43 and histidine 81. Isopentenyl diphosphate-binding residues include histidine 43 and histidine 81. A [4Fe-4S] cluster-binding site is contributed by cysteine 103. Histidine 131 serves as a coordination point for (2E)-4-hydroxy-3-methylbut-2-enyl diphosphate. Histidine 131 is a dimethylallyl diphosphate binding site. Residue histidine 131 coordinates isopentenyl diphosphate. Catalysis depends on glutamate 133, which acts as the Proton donor. Residue threonine 170 coordinates (2E)-4-hydroxy-3-methylbut-2-enyl diphosphate. Position 198 (cysteine 198) interacts with [4Fe-4S] cluster. (2E)-4-hydroxy-3-methylbut-2-enyl diphosphate is bound by residues serine 226, asparagine 228, and serine 271. Positions 226, 228, and 271 each coordinate dimethylallyl diphosphate. Positions 226, 228, and 271 each coordinate isopentenyl diphosphate.

Belongs to the IspH family. It depends on [4Fe-4S] cluster as a cofactor.

It carries out the reaction isopentenyl diphosphate + 2 oxidized [2Fe-2S]-[ferredoxin] + H2O = (2E)-4-hydroxy-3-methylbut-2-enyl diphosphate + 2 reduced [2Fe-2S]-[ferredoxin] + 2 H(+). It catalyses the reaction dimethylallyl diphosphate + 2 oxidized [2Fe-2S]-[ferredoxin] + H2O = (2E)-4-hydroxy-3-methylbut-2-enyl diphosphate + 2 reduced [2Fe-2S]-[ferredoxin] + 2 H(+). It functions in the pathway isoprenoid biosynthesis; dimethylallyl diphosphate biosynthesis; dimethylallyl diphosphate from (2E)-4-hydroxy-3-methylbutenyl diphosphate: step 1/1. The protein operates within isoprenoid biosynthesis; isopentenyl diphosphate biosynthesis via DXP pathway; isopentenyl diphosphate from 1-deoxy-D-xylulose 5-phosphate: step 6/6. Its function is as follows. Catalyzes the conversion of 1-hydroxy-2-methyl-2-(E)-butenyl 4-diphosphate (HMBPP) into a mixture of isopentenyl diphosphate (IPP) and dimethylallyl diphosphate (DMAPP). Acts in the terminal step of the DOXP/MEP pathway for isoprenoid precursor biosynthesis. This chain is 4-hydroxy-3-methylbut-2-enyl diphosphate reductase, found in Lysinibacillus sphaericus (strain C3-41).